A 424-amino-acid chain; its full sequence is Satellite RNA 48 kDa protein (424 aa).

The interval 51-83 is disordered; the sequence is PRDGGGRKRKADGSQGRPSNNPGRPSRKWTEKT.

The protein belongs to the nepovirus satellite RNA 48 kDa protein family.

The chain is Satellite RNA 48 kDa protein from Tomato black ring virus (strain L) (TBRV).